The sequence spans 88 residues: UPF0297 protein Bcer98_3100 (88 aa).

It belongs to the UPF0297 family.

The protein is UPF0297 protein Bcer98_3100 of Bacillus cytotoxicus (strain DSM 22905 / CIP 110041 / 391-98 / NVH 391-98).